We begin with the raw amino-acid sequence, 192 residues long: UPF0312 protein PC1_2518 (192 aa).

The first 23 residues, 1–23 (MLKKTLLSLTAVSMLASAGSALA), serve as a signal peptide directing secretion.

It belongs to the UPF0312 family. Type 1 subfamily.

It is found in the periplasm. This Pectobacterium carotovorum subsp. carotovorum (strain PC1) protein is UPF0312 protein PC1_2518.